Here is a 143-residue protein sequence, read N- to C-terminus: Putative pre-16S rRNA nuclease (143 aa).

The protein belongs to the YqgF nuclease family.

The protein resides in the cytoplasm. In terms of biological role, could be a nuclease involved in processing of the 5'-end of pre-16S rRNA. This chain is Putative pre-16S rRNA nuclease, found in Lactobacillus gasseri (strain ATCC 33323 / DSM 20243 / BCRC 14619 / CIP 102991 / JCM 1131 / KCTC 3163 / NCIMB 11718 / NCTC 13722 / AM63).